Here is a 674-residue protein sequence, read N- to C-terminus: Polyunsaturated fatty acid 5-lipoxygenase (674 aa).

The region spanning 2–118 is the PLAT domain; it reads PSYTVTVATG…EVVLRDGRAK (117 aa). Positions 17, 18, 19, 44, 45, 47, 79, and 80 each coordinate Ca(2+). One can recognise a Lipoxygenase domain in the interval 119 to 674; that stretch reads LARDDQIHIL…PDRIPNSVAI (556 aa). A Phosphoserine; by MAPKAPK2 modification is found at S272. Fe cation is bound by residues H368 and H373. Phosphoserine; by PKA is present on S524. 3 residues coordinate Fe cation: H551, N555, and I674.

This sequence belongs to the lipoxygenase family. Homodimer. Interacts with ALOX5AP and LTC4S. Interacts with COTL1, the interaction is required for stability and efficient catalytic activity. Interacts with PIK3R1; this interaction bridges ALOX5 with CD40 after CD40 ligation in B cells and leads to the production of reactive oxygen species (ROS). Interacts (via PLAT domain) with DICER1 (via Dicer dsRNA-binding fold domain); this interaction enhances arachidonate 5-lipoxygenase activity and modifies the miRNA precursor processing activity of DICER1. Fe cation serves as cofactor. Serine phosphorylation by MAPKAPK2 is stimulated by arachidonic acid. Phosphorylation on Ser-524 by PKA has an inhibitory effect. Phosphorylation on Ser-272 prevents export from the nucleus. Phosphorylation at Ser-524 is stimulated by 8-bromo-3',5'-cyclic AMP or prostaglandin E2.

The protein localises to the cytoplasm. Its subcellular location is the nucleus matrix. The protein resides in the nucleus membrane. It is found in the perinuclear region. It localises to the cytosol. The protein localises to the nucleus envelope. Its subcellular location is the nucleus intermembrane space. The catalysed reaction is (5Z,8Z,11Z,14Z)-eicosatetraenoate + O2 = leukotriene A4 + H2O. The enzyme catalyses 18-HEPE + O2 = (5S)-hydroperoxy-18-hydroxy-(7E,9E,11Z,14Z,16E)-eicosapentaenoate. It carries out the reaction (18R)-hydroxy-(5Z,8Z,11Z,14Z,16E)-eicosapentaenoate + O2 = (5S)-hydroperoxy-(18R)-hydroxy-(6E,8Z,11Z,14Z,16E)-eicosapentaenoate. It catalyses the reaction (18S)-hydroxy-(5Z,8Z,11Z,14Z,16E)-eicosapentaenoate + O2 = (5S)-hydroperoxy-(18S)-hydroxy-(6E,8Z,11Z,14Z,16E)-eicosapentaenoate. The catalysed reaction is (5S)-hydroperoxy-(18S)-hydroxy-(6E,8Z,11Z,14Z,16E)-eicosapentaenoate = (5S,6S)-epoxy-(18S)-hydroxy-(7E,9E,11Z,14Z,16E)-eicosapentaenoate + H2O. The enzyme catalyses (5S)-hydroperoxy-(18R)-hydroxy-(6E,8Z,11Z,14Z,16E)-eicosapentaenoate = (5S,6S)-epoxy-(18R)-hydroxy-(7E,9E,11Z,14Z,16E)-eicosapentaenoate + H2O. It carries out the reaction (5S)-hydroperoxy-18-hydroxy-(7E,9E,11Z,14Z,16E)-eicosapentaenoate = (5S,6S)-epoxy-18-hydroxy-(7E,9E,11Z,14Z,16E)-eicosapentaenoate + H2O. It catalyses the reaction (5Z,8Z,11Z,14Z)-eicosatetraenoate + O2 = (5S)-hydroperoxy-(6E,8Z,11Z,14Z)-eicosatetraenoate. The catalysed reaction is (15S)-hydroxy-(5Z,8Z,11Z,13E)-eicosatetraenoate + O2 = (5S)-hydroperoxy-(15S)-hydroxy-(6E,8Z,11Z,13E)-eicosatetraenoate. The enzyme catalyses (5S)-hydroperoxy-(6E,8Z,11Z,14Z)-eicosatetraenoate = leukotriene A4 + H2O. It carries out the reaction (5Z,8Z,11Z,14Z)-eicosatetraenoate + O2 = (8S)-hydroperoxy-(5Z,9E,11Z,14Z)-eicosatetraenoate. It catalyses the reaction (5Z,8Z,11Z,14Z)-eicosatetraenoate + O2 = (12S)-hydroperoxy-(5Z,8Z,10E,14Z)-eicosatetraenoate. The catalysed reaction is (5Z,8Z)-eicosadienoate + O2 = (5S)-hydroperoxy-(6E,8Z)-eicosadienoate. The enzyme catalyses (12S)-hydroxy-(5Z,8Z,10E,14Z)-eicosatetraenoate + O2 = (5S)-hydroperoxy-(12S)-hydroxy-(6E,8Z,10E,14Z)-eicosatetraenoate. It carries out the reaction (5Z,8Z,11Z,14Z,17Z)-eicosapentaenoate + O2 = 5-hydroperoxy-(6E,8Z,11Z,14Z,17Z)-eicosapentaenoate. It catalyses the reaction (4Z,7Z,10Z,13Z,16Z,19Z)-docosahexaenoate + O2 = (14S)-hydroperoxy-(4Z,7Z,10Z,12E,16Z,19Z)-docosahexaenoate. The catalysed reaction is (4Z,7Z,10Z,13Z,16Z,19Z)-docosahexaenoate + O2 = (7S)-hydroperoxy-(4Z,8E,10Z,13Z,16Z,19Z)-docosahexaenoate. The enzyme catalyses (4Z,7Z,10Z,13Z,16Z,19Z)-docosahexaenoate + O2 = (17S)-hydroperoxy-(4Z,7Z,10Z,13Z,15E,19Z)-docosahexaenoate. The protein operates within lipid metabolism; leukotriene A4 biosynthesis. With respect to regulation, undergoes a sequential loss of the oxygenase and pseudoperoxidase activities which is dependent on the structural characteristics of the substrate for the reaction, on oxygen concentration and on exposure to phospholipids and calcium. 15-HETE and other 15-mono-hydroxyeicosanoids exhibit the highest inhibitory potencies in their capability of suppressing 5-lipoxygenation of arachidonic acid, whereas the other HETEs, (5S,15S)-dihydroxy-(6E,8Z,11Z,13E)-eicosatetraenoic acid (5,15-diHETE) as well as octadecanoids, are modest or poor inhibitors. The formation of (5S)-hydroperoxy-(15S)-hydroxy-(6E,8Z,11Z,13E)-eicosatetraenoate is strongly stimulated by either hydroperoxypolyenoic fatty acids or arachidonic acid. Arachidonate 5-lipoxygenase and leukotriene A4 synthase activities are allosterically increased by ATP. Functionally, catalyzes the oxygenation of arachidonate ((5Z,8Z,11Z,14Z)-eicosatetraenoate) to 5-hydroperoxyeicosatetraenoate (5-HPETE) followed by the dehydration to 5,6- epoxyeicosatetraenoate (Leukotriene A4/LTA4), the first two steps in the biosynthesis of leukotrienes, which are potent mediators of inflammation. Also catalyzes the oxygenation of arachidonate into 8-hydroperoxyicosatetraenoate (8-HPETE) and 12-hydroperoxyicosatetraenoate (12-HPETE). Displays lipoxin synthase activity being able to convert (15S)-HETE into a conjugate tetraene. Although arachidonate is the preferred substrate, this enzyme can also metabolize oxidized fatty acids derived from arachidonate such as (15S)-HETE, eicosapentaenoate (EPA) such as (18R)- and (18S)-HEPE or docosahexaenoate (DHA) which lead to the formation of specialized pro-resolving mediators (SPM) lipoxin and resolvins E and D respectively, therefore it participates in anti-inflammatory responses. Oxidation of DHA directly inhibits endothelial cell proliferation and sprouting angiogenesis via peroxisome proliferator-activated receptor gamma (PPARgamma). It does not catalyze the oxygenation of linoleic acid and does not convert (5S)-HETE to lipoxin isomers. In addition to inflammatory processes, it participates in dendritic cell migration, wound healing through an antioxidant mechanism based on heme oxygenase-1 (HO-1) regulation expression, monocyte adhesion to the endothelium via ITGAM expression on monocytes. Moreover, it helps establish an adaptive humoral immunity by regulating primary resting B cells and follicular helper T cells and participates in the CD40-induced production of reactive oxygen species (ROS) after CD40 ligation in B cells through interaction with PIK3R1 that bridges ALOX5 with CD40. May also play a role in glucose homeostasis, regulation of insulin secretion and palmitic acid-induced insulin resistance via AMPK. Can regulate bone mineralization and fat cell differentiation increases in induced pluripotent stem cells. The sequence is that of Polyunsaturated fatty acid 5-lipoxygenase from Homo sapiens (Human).